Reading from the N-terminus, the 463-residue chain is Methionine aminopeptidase 2-2 (463 aa).

The disordered stretch occupies residues 1-107 (MGAKTFEGGD…VPLSQLFPDG (107 aa)). Acidic residues predominate over residues 37–53 (EDGDGEFGTDDDDDGDG). Residues 69–83 (PKKRKRSKKKKSNKK) are compositionally biased toward basic residues. Histidine 215 contacts substrate. A divalent metal cation contacts are provided by aspartate 236, aspartate 247, and histidine 316. Histidine 324 contributes to the substrate binding site. A divalent metal cation contacts are provided by glutamate 349 and glutamate 444.

It belongs to the peptidase M24A family. Methionine aminopeptidase eukaryotic type 2 subfamily. Co(2+) is required as a cofactor. Requires Zn(2+) as cofactor. The cofactor is Mn(2+). It depends on Fe(2+) as a cofactor.

It is found in the cytoplasm. The enzyme catalyses Release of N-terminal amino acids, preferentially methionine, from peptides and arylamides.. In terms of biological role, cotranslationally removes the N-terminal methionine from nascent proteins. The N-terminal methionine is often cleaved when the second residue in the primary sequence is small and uncharged (Met-Ala-, Cys, Gly, Pro, Ser, Thr, or Val). The protein is Methionine aminopeptidase 2-2 of Talaromyces marneffei (strain ATCC 18224 / CBS 334.59 / QM 7333) (Penicillium marneffei).